Here is a 598-residue protein sequence, read N- to C-terminus: tRNA(Met) cytidine acetyltransferase TmcA (598 aa).

ATP contacts are provided by residues Gln141, 163–172 (GRGKSTLAGK), and Arg288. The N-acetyltransferase domain maps to 332–490 (TDLRRLFDAD…HSAMMLYPLS (159 aa)). Residues 411-413 (IAV), 418-424 (QNQGIGS), and Arg462 contribute to the acetyl-CoA site.

This sequence belongs to the RNA cytidine acetyltransferase family. TmcA subfamily.

The protein resides in the cytoplasm. The enzyme catalyses cytidine(34) in elongator tRNA(Met) + acetyl-CoA + ATP + H2O = N(4)-acetylcytidine(34) in elongator tRNA(Met) + ADP + phosphate + CoA + H(+). Functionally, catalyzes the formation of N(4)-acetylcytidine (ac(4)C) at the wobble position of tRNA(Met), by using acetyl-CoA as an acetyl donor and ATP (or GTP). The polypeptide is tRNA(Met) cytidine acetyltransferase TmcA (Haemophilus ducreyi (strain 35000HP / ATCC 700724)).